The primary structure comprises 306 residues: Aspartate carbamoyltransferase catalytic subunit (306 aa).

2 residues coordinate carbamoyl phosphate: Arg-51 and Thr-52. L-aspartate is bound at residue Lys-80. Carbamoyl phosphate-binding residues include Arg-101, His-129, and Gln-132. L-aspartate contacts are provided by Arg-162 and Arg-224. Carbamoyl phosphate-binding residues include Leu-263 and Pro-264.

This sequence belongs to the aspartate/ornithine carbamoyltransferase superfamily. ATCase family. Heterododecamer (2C3:3R2) of six catalytic PyrB chains organized as two trimers (C3), and six regulatory PyrI chains organized as three dimers (R2).

The catalysed reaction is carbamoyl phosphate + L-aspartate = N-carbamoyl-L-aspartate + phosphate + H(+). The protein operates within pyrimidine metabolism; UMP biosynthesis via de novo pathway; (S)-dihydroorotate from bicarbonate: step 2/3. Catalyzes the condensation of carbamoyl phosphate and aspartate to form carbamoyl aspartate and inorganic phosphate, the committed step in the de novo pyrimidine nucleotide biosynthesis pathway. The protein is Aspartate carbamoyltransferase catalytic subunit of Parabacteroides distasonis (strain ATCC 8503 / DSM 20701 / CIP 104284 / JCM 5825 / NCTC 11152).